The primary structure comprises 1365 residues: MSSSFFNPSFAFSSHFDPDGAPLSELSWSSSLAVVAVSFSGIFTVVILMLACLCCKKGGIGFKEFENAEGDEYVADFSEQGSPAAAAQTGPDVYVLPLTEVSLPMAKQPGRSVQLLKSTDLGRHSLLYLKEIGHGWFGKVFLGEVHSGVSGTQVVVKELKVSASVQEQMQFLEEAQPYRALQHSNLLQCLAQCAEVTPYLLVMEFCPLGDLKGYLRSCRVTESMAPDPLTLQRMACEVACGVLHLHRHNYVHSDLALRNCLLTADLTVKVGDYGLSHCKYREDYLVTADQLWVPLRWIAPELVDEVHGNLLVVDQTKSSNVWSLGVTIWELFELGAQPYPQHSDRQVLAYAVREQQLKLPKPQLQLALSDRWYEVMQFCWLQPEQRPTAEEVHLLLSYLCAKGTTELEEEFERRWRSLRPGGSTGLGSGSAAPAAATAASAELTAASSFPLLERFTSDGFHVDSDDVLTVTETSHGLNFEYKWEAGCGAEEYPPSGAASSPGSAARLQELCAPDSSPPGVVPVLSAHSPSVGSEYFIRLEGAVPAAGHDPDCAGCAPSPQAVTDQDNNSEESTVASLAMEPLLGHAPPTEGLWGPCDHHSHRRQGSPCPSRSPSPGTPMLPAEDIDWGVATFCPPFFDDPLGASPSGSPGAQPSPSDEEPEEGKVGLAAQCGHWSSNMSANNNSASRDPESWDPGYVSSFTDSYRDDCSSLEQTPRASPEVGHLLSQEDPRDFLPGLVAVSPGQEPSRPFNLLPLCPAKGLAPAACLITSPWTEGAVGGAENPIVEPKLAQEAEGSAEPQLPLPSVPSPSCEGASLPSEEASAPDILPASPTPAAGSWVTVPEPAPTLESSGSSLGQEAPSSEDEDTTEATSGVFTDLSSDGPHTEKSGIVPALRSLQKQVGTPDSLDSLDIPSSASDGGCEVLSPSAAGPPGGQPRAVDSGYDTENYESPEFVLKEAHESSEPEAFGEPASEGESPGPDPLLSVSLGGLSKKSPYRDSAYFSDLDAESEPTFGPEKHSGIQDSQKEQDLRSPPSPGHQSVQAFPRSAVSSEVLSPPQQSEEPLPEVPRPEPLGAQGPVGVQPVPGPSHSKCFPLTSVPLISEGSGTEPQGPSGQLSGRAQQGQMGNPSTPRSPLCLALPGHPGALEGRPEEDEDTEDSEESDEELRCYSVQEPSEDSEEEPPAVPVVVAESQSARNLRSLLKMPSLLSEAFCDDLERKKKAVSFFDDVTVYLFDQESPTRETGEPFPSTKESLPTFLEGGPSSPSATGLPLRAGHSPDSSAPEPGSRFEWDGDFPLVPGKAALVTELDPADPVLAAPPTPAAPFSRFTVSPTPASRFSITHISDSDAQSVGGPAAGAGGRYTEA.

The chain crosses the membrane as a helical span at residues 32 to 52 (LAVVAVSFSGIFTVVILMLAC). The region spanning 126-396 (LLYLKEIGHG…PTAEEVHLLL (271 aa)) is the Protein kinase domain. Residues 132-140 (IGHGWFGKV) and Lys-157 each bind ATP. The active-site Proton acceptor is the Asp-254. At Ser-500 the chain carries Phosphoserine. Disordered stretches follow at residues 550–623 (PDCA…LPAE), 638–698 (DDPL…GYVS), 791–1186 (QEAE…PAVP), 1237–1293 (ESPT…EWDG), and 1343–1365 (ISDS…YTEA). Positions 560 to 575 (QAVTDQDNNSEESTVA) are enriched in polar residues. 2 stretches are compositionally biased toward low complexity: residues 638 to 655 (DDPL…QPSP) and 675 to 686 (SSNMSANNNSAS). Composition is skewed to polar residues over residues 848-860 (LESS…QEAP) and 869-879 (EATSGVFTDLS). Low complexity-rich tracts occupy residues 904 to 918 (PDSL…SASD) and 981 to 993 (PLLS…LSKK). The span at 1015 to 1030 (PEKHSGIQDSQKEQDL) shows a compositional bias: basic and acidic residues. The residue at position 1035 (Ser-1035) is a Phosphoserine. The segment covering 1037 to 1053 (GHQSVQAFPRSAVSSEV) has biased composition (polar residues). Low complexity predominate over residues 1072–1083 (PLGAQGPVGVQP). Polar residues predominate over residues 1104–1132 (GSGTEPQGPSGQLSGRAQQGQMGNPSTPR). Residues 1150–1164 (PEEDEDTEDSEESDE) are compositionally biased toward acidic residues. Thr-1156 bears the Phosphothreonine mark. Phosphoserine is present on residues Ser-1159, Ser-1162, Ser-1175, Ser-1178, and Ser-1253. Residues 1354-1365 (PAAGAGGRYTEA) are compositionally biased toward gly residues.

Belongs to the protein kinase superfamily. Tyr protein kinase family. Interacts with CDK5. In terms of processing, autophosphorylated. Phosphorylated by CDK5. As to expression, expressed in brain, and, to a lower extent, in kidney, heart, lung and skeletal muscle. In the brain, expressed in the olfactory bulb, cerebellum, striatum, hippocampal formation, thalamus, hypothalamus, and pontine nuclei (at protein level).

The protein localises to the membrane. The protein resides in the cytoplasm. It localises to the perinuclear region. Its subcellular location is the cell projection. It is found in the dendrite. The protein localises to the axon. The protein resides in the growth cone. It carries out the reaction L-seryl-[protein] + ATP = O-phospho-L-seryl-[protein] + ADP + H(+). The enzyme catalyses L-threonyl-[protein] + ATP = O-phospho-L-threonyl-[protein] + ADP + H(+). Functionally, may be involved in neuronal differentiation. The chain is Serine/threonine-protein kinase LMTK1 (Aatk) from Mus musculus (Mouse).